Here is a 638-residue protein sequence, read N- to C-terminus: Phosphomethylpyrimidine synthase (638 aa).

Residues N235, M264, Y293, H329, 349-351, 390-393, and E429 contribute to the substrate site; these read SRG and DGLR. H433 contacts Zn(2+). Y456 serves as a coordination point for substrate. A Zn(2+)-binding site is contributed by H497. C577, C580, and C585 together coordinate [4Fe-4S] cluster.

This sequence belongs to the ThiC family. In terms of assembly, homodimer. It depends on [4Fe-4S] cluster as a cofactor.

The enzyme catalyses 5-amino-1-(5-phospho-beta-D-ribosyl)imidazole + S-adenosyl-L-methionine = 4-amino-2-methyl-5-(phosphooxymethyl)pyrimidine + CO + 5'-deoxyadenosine + formate + L-methionine + 3 H(+). Its pathway is cofactor biosynthesis; thiamine diphosphate biosynthesis. Catalyzes the synthesis of the hydroxymethylpyrimidine phosphate (HMP-P) moiety of thiamine from aminoimidazole ribotide (AIR) in a radical S-adenosyl-L-methionine (SAM)-dependent reaction. This chain is Phosphomethylpyrimidine synthase, found in Polaromonas naphthalenivorans (strain CJ2).